Reading from the N-terminus, the 78-residue chain is Putative defensin-like protein 133 (78 aa).

Positions 1 to 24 (MKRSFLLLLTILTIFIILGQGVMG) are cleaved as a signal peptide. Disulfide bonds link Cys34–Cys75, Cys44–Cys68, Cys49–Cys72, and Cys53–Cys74.

Belongs to the DEFL family.

The protein localises to the secreted. The chain is Putative defensin-like protein 133 (LCR33) from Arabidopsis thaliana (Mouse-ear cress).